The chain runs to 623 residues: DELLA protein RHT-1 (623 aa).

A disordered region spans residues 1 to 27 (MKREYQDAGGSGGGGGGMGSSEDKMMV). A compositionally biased stretch (gly residues) spans 9–19 (GGSGGGGGGMG). The short motif at 38–42 (DELLA) is the DELLA motif element. 2 disordered regions span residues 109-138 (LNAPPPPLPPAPQLNASTSSTVTGSGGYFD) and 159-201 (AGAT…GARS). The segment covering 111-120 (APPPPLPPAP) has biased composition (pro residues). Composition is skewed to low complexity over residues 121–131 (QLNASTSSTVT) and 181–201 (GGSSTSSSSSSSSSLGGGARS). Residues 225–619 (VDTQEAGIRL…RPLIATSAWR (395 aa)) enclose the GRAS domain. Residues 232 to 288 (IRLVHALLACAEAVQQENLSAAEALVKQIPLLAASQGGAMRKVAAYFGEALARRVFR) are leucine repeat I (LRI). Residues 239–243 (LACAE) carry the LxCxE motif motif. A VHIID region spans residues 307–372 (HAHFYESCPY…GGPPSFRLTG (66 aa)). Positions 338 to 342 (VHVVD) match the VHIID motif. The tract at residues 386-425 (QVGWKLAQFAHTIRVDFQYRGLVAATLADLEPFMLQPEGE) is leucine repeat II (LRII). Residues 435 to 540 (IAVNSVFEMH…EVYLGRQICN (106 aa)) are PFYRE. An SAW region spans residues 543–619 (ACEGAERTER…RPLIATSAWR (77 aa)).

It belongs to the GRAS family. DELLA subfamily. Post-translationally, phosphorylated. In terms of processing, ubiquitinated. Upon GA application it is ubiquitinated, leading to its subsequent degradation.

It localises to the nucleus. Functionally, probable transcriptional regulator that acts as a repressor of the gibberellin (GA) signaling pathway. Probably acts by participating in large multiprotein complexes that repress transcription of GA-inducible genes. Upon GA application, it is degraded by the proteasome, allowing the GA signaling pathway. The polypeptide is DELLA protein RHT-1 (RHT1) (Triticum aestivum (Wheat)).